We begin with the raw amino-acid sequence, 178 residues long: Large ribosomal subunit protein uL10 (178 aa).

The protein belongs to the universal ribosomal protein uL10 family. As to quaternary structure, part of the ribosomal stalk of the 50S ribosomal subunit. The N-terminus interacts with L11 and the large rRNA to form the base of the stalk. The C-terminus forms an elongated spine to which L12 dimers bind in a sequential fashion forming a multimeric L10(L12)X complex.

Forms part of the ribosomal stalk, playing a central role in the interaction of the ribosome with GTP-bound translation factors. The protein is Large ribosomal subunit protein uL10 of Dictyoglomus turgidum (strain DSM 6724 / Z-1310).